The following is a 390-amino-acid chain: Immunoglobulin mu Fc receptor (390 aa).

A signal peptide spans 1 to 16 (MDFWLWPLYFLPVSGA). Residues 17-251 (LRILPEVKVE…GSQSGREGQG (235 aa)) are Extracellular-facing. Residues 23–123 (VKVEGELGGS…KTQKVTLNVH (101 aa)) form the Ig-like domain. The tract at residues 33–115 (VTIKCPLPEM…AGMNTDRGKT (83 aa)) is CDR4. 2 disulfide bridges follow: cysteine 37-cysteine 104 and cysteine 49-cysteine 58. Residues 40–45 (PEMHVR) are CDR1. A CDR2 region spans residues 59–70 (GTVVSTTNFIKA). Threonine 92 is subject to Phosphothreonine. A CDR3 region spans residues 106 to 115 (AGMNTDRGKT). The segment at 166 to 204 (PAQRGKVPPVHHSSPTTQITHRPRVSRASSVAGDKPRTF) is disordered. The chain crosses the membrane as a helical span at residues 252-272 (FHILIPTILGLFLLALLGLVV). Residues 273 to 390 (KRAVERRKAL…DSDDYINVPA (118 aa)) are Cytoplasmic-facing. 2 stretches are compositionally biased toward low complexity: residues 293 to 311 (MRALESSQRPRGSPRPRSQ) and 325 to 334 (ADAAGTGEAP). A disordered region spans residues 293 to 348 (MRALESSQRPRGSPRPRSQNNIYSACPRRARGADAAGTGEAPVPGPGAPLPPAPLQ). Pro residues predominate over residues 335–346 (VPGPGAPLPPAP).

As to quaternary structure, interacts (via Ig-like domain) with IGHM (via CH4/Cmu4 domain), both secreted and membrane-bound IgM; the interaction is glycan-independent and multivalent theoretically involving up to eight binding sites for the IgM pentamer. Phosphorylated on both Tyr and Ser residues. In terms of processing, O-glycosylated. Sialylated. O-linked glycans regulate trafficking to the plasma membrane. In terms of tissue distribution, expressed by CD19-positive B cells and CD4-positive and CD8-positive T cell populations in primary and secondary lymphoid tissues (at protein level). Among B cell subsets, detected in a subset of bone marrow pro- and pre-B cells, in most follicular and memory B cells and in a small subset of germinal center B cells (at protein level). Expressed at lower levels in CD56-positive NK cells (at protein level). Expressed in lymph nodes, lung, thymus and kidneys. Very weak expression detected in spleen, liver, heart, and salivary gland.

Its subcellular location is the cell membrane. It is found in the early endosome membrane. It localises to the golgi apparatus. The protein resides in the trans-Golgi network membrane. The protein localises to the lysosome membrane. Its subcellular location is the secreted. High-affinity Fc receptor for immunoglobulin M (IgM), both secreted and membrane-bound IgM. Primarily regulates IgM transport and homeostasis. In lymphoid cells, enables exocytosis of membrane-bound IgM on the plasma membrane as well as endocytosis of IgM-antigen complexes toward lysosomes for degradation. In mucosal epithelium, mediates retrotranscytosis of antigen-IgM complexes across mucosal M cells toward antigen-presenting cells in mucosal lymphoid tissues. Triggers costimulatory signaling and mediates most of IgM effector functions involved in B cell development and primary immune response to infection. Likely limits tonic IgM BCR signaling to self-antigens for proper negative selection of autoreactive B cells in the bone marrow and for the maintenance of regulatory B cell pool in peripheral lymphoid organs. Mediates antibody responses to T cell-dependent and T cell-independent antigens and promotes induction of an efficient neutralizing IgG response. Engages in cross-talk with antigen-receptor signaling via the non-canonical NF-kappa-B, MAP kinases and calcium signaling pathways. This is Immunoglobulin mu Fc receptor from Homo sapiens (Human).